Reading from the N-terminus, the 360-residue chain is MRFSLFVHMERVSDQQTQKQLYDEMIELCQIADRGGMHAIWTGEHHAMNFTIAPNPFLNIADLANKTKHVRLGTGTVVAPFWHPIKLAGEAAMTDIISNGRLDIGIARGAYSFEYERMVPGMDAWSAGQRLREMIPAIKNLWKGDYEHNGEFWQFPKTTSAPQPLQQPNPPIWVAARDPNSHEFAVQNGCNVQVTPLHLGDEEVEKLMGHFNSACEKFQDIERPEIMLLRHTYVADSEEDAQVAANEMNVFYNYFGAWFKNEREINQGLIAPLSDEEIAAHPFYTPEAMRKNNVIGQAQEVIDRLKAYEAMGYDEYSFWIDTGMSFERKKASLERMINEVMPAFSESKVDRRHATISAVY.

The protein belongs to the bacterial luciferase oxidoreductase family. In terms of assembly, homodimer. The trigonelline monooxygenase is composed of a reductase component TgnA and an oxygenase component TgnB.

The catalysed reaction is N-methylnicotinate + FMNH2 + O2 = (Z)-2-((N-methylformamido)methylene)-5-hydroxybutanolactone + FMN + H(+). The enzyme catalyses N-methylnicotinate + FADH2 + O2 = (Z)-2-((N-methylformamido)methylene)-5-hydroxybutanolactone + FAD + H(+). Functionally, involved in the degradation of the pyridine ring of trigonelline (TG; N-methylnicotinate) into succinate and methylamine as carbon and nitrogen sources, respectively. Catalyzes the insertion of two oxygens, followed by a ring cleavage of trigonelline to yield (Z)-2-((N-methylformamido)methylene)-5-hydroxybutyrolactone (MFMB). It is able to use reduced FMN or FAD. This is Flavin-dependent trigonelline monooxygenase, oxygenase component from Acinetobacter baylyi (strain ATCC 33305 / BD413 / ADP1).